We begin with the raw amino-acid sequence, 70 residues long: Small ribosomal subunit protein bS21 (70 aa).

Residues 48 to 61 (KLAAAVKRQSKRLR) show a composition bias toward basic residues. The tract at residues 48–70 (KLAAAVKRQSKRLRSQQLPPKMY) is disordered.

Belongs to the bacterial ribosomal protein bS21 family.

This chain is Small ribosomal subunit protein bS21, found in Thiobacillus denitrificans (strain ATCC 25259 / T1).